A 382-amino-acid chain; its full sequence is UDP-N-acetylglucosamine--N-acetylmuramyl-(pentapeptide) pyrophosphoryl-undecaprenol N-acetylglucosamine transferase (382 aa).

UDP-N-acetyl-alpha-D-glucosamine-binding positions include 17-19 (TAG), N137, R179, S213, and Q308.

Belongs to the glycosyltransferase 28 family. MurG subfamily.

The protein resides in the cell membrane. It catalyses the reaction di-trans,octa-cis-undecaprenyl diphospho-N-acetyl-alpha-D-muramoyl-L-alanyl-D-glutamyl-meso-2,6-diaminopimeloyl-D-alanyl-D-alanine + UDP-N-acetyl-alpha-D-glucosamine = di-trans,octa-cis-undecaprenyl diphospho-[N-acetyl-alpha-D-glucosaminyl-(1-&gt;4)]-N-acetyl-alpha-D-muramoyl-L-alanyl-D-glutamyl-meso-2,6-diaminopimeloyl-D-alanyl-D-alanine + UDP + H(+). It participates in cell wall biogenesis; peptidoglycan biosynthesis. Functionally, cell wall formation. Catalyzes the transfer of a GlcNAc subunit on undecaprenyl-pyrophosphoryl-MurNAc-pentapeptide (lipid intermediate I) to form undecaprenyl-pyrophosphoryl-MurNAc-(pentapeptide)GlcNAc (lipid intermediate II). The chain is UDP-N-acetylglucosamine--N-acetylmuramyl-(pentapeptide) pyrophosphoryl-undecaprenol N-acetylglucosamine transferase from Rhodococcus opacus (strain B4).